The primary structure comprises 216 residues: MPLYVIDKPITLHILTQLRDKYTDQINFRKNLVRLGRILGYEISNTLDYEIVEVETPLGVKTKGVDITDLNNIVIINILRAAVPLVEGLLKAFPKARQGVIGASRVEVDGKEVPKDMDVYIYYKKIPDIRAKVDNVIIADPMIATASTMLKVLEEVVKANPKRIYIVSIISSEYGVNKILSKYPFIYLFTVAIDPELNNKGYILPGLGDAGDRAFG.

CTP-binding positions include 29 to 30 (RK) and Arg-37. Residue 30–34 (KNLVR) coordinates GTP. A 5-phospho-alpha-D-ribose 1-diphosphate-binding site is contributed by Arg-80. 87 to 96 (EGLLKAFPKA) is a binding site for CTP. Residues Arg-105 and 140–148 (DPMIATAST) each bind 5-phospho-alpha-D-ribose 1-diphosphate. Uracil contacts are provided by residues Ile-203 and 208-210 (GDA). Asp-209 serves as a coordination point for 5-phospho-alpha-D-ribose 1-diphosphate.

This sequence belongs to the UPRTase family. Homotetramer. The cofactor is Mg(2+).

The catalysed reaction is UMP + diphosphate = 5-phospho-alpha-D-ribose 1-diphosphate + uracil. The protein operates within pyrimidine metabolism; UMP biosynthesis via salvage pathway; UMP from uracil: step 1/1. With respect to regulation, allosterically activated by GTP. Inhibited by CTP and UMP in combination. In terms of biological role, catalyzes the conversion of uracil and 5-phospho-alpha-D-ribose 1-diphosphate (PRPP) to UMP and diphosphate. This is Uracil phosphoribosyltransferase (upp) from Saccharolobus solfataricus (strain ATCC 35092 / DSM 1617 / JCM 11322 / P2) (Sulfolobus solfataricus).